The chain runs to 262 residues: Ornithine carbamoyltransferase (262 aa).

Carbamoyl phosphate is bound by residues 3–7 (STRTR), Gln-30, Arg-54, and 81–84 (HPTQ). L-ornithine contacts are provided by residues Asn-114, Asp-178, and 182-183 (SM). Carbamoyl phosphate is bound by residues 219–222 (HCLP) and Thr-247.

Belongs to the aspartate/ornithine carbamoyltransferase superfamily. OTCase family.

The protein localises to the cytoplasm. It carries out the reaction carbamoyl phosphate + L-ornithine = L-citrulline + phosphate + H(+). It functions in the pathway amino-acid biosynthesis; L-arginine biosynthesis; L-arginine from L-ornithine and carbamoyl phosphate: step 1/3. The protein operates within amino-acid degradation; L-arginine degradation via ADI pathway; carbamoyl phosphate from L-arginine: step 2/2. Its function is as follows. Reversibly catalyzes the transfer of the carbamoyl group from carbamoyl phosphate (CP) to the N(epsilon) atom of ornithine (ORN) to produce L-citrulline. This chain is Ornithine carbamoyltransferase (argF), found in Neisseria meningitidis.